A 588-amino-acid chain; its full sequence is Phosphatidylinositol-3,5-bisphosphate 3-phosphatase mtm-1 (588 aa).

Residues 20–91 (IQESIDLKLL…GQVSRIEKVG (72 aa)) form the GRAM domain. The Myotubularin phosphatase domain occupies 164–543 (GWKIYSAEKE…CGLHVWIDYY (380 aa)). A 1,2-diacyl-sn-glycero-3-phospho-(1D-myo-inositol-3,5-bisphosphate) contacts are provided by N293, N316, and I317. Residues N293, N316, and I317 each contribute to the a 1,2-diacyl-sn-glycero-3-phospho-(1D-myo-inositol-3-phosphate) site. C378 acts as the Phosphocysteine intermediate in catalysis. A 1,2-diacyl-sn-glycero-3-phospho-(1D-myo-inositol-3,5-bisphosphate)-binding residues include S379, D380, G381, W382, D383, R384, K420, and R424. S379, D380, G381, W382, D383, and R384 together coordinate a 1,2-diacyl-sn-glycero-3-phospho-(1D-myo-inositol-3-phosphate). S379 contacts phosphate. Phosphate contacts are provided by G381, W382, D383, and R384. An a 1,2-diacyl-sn-glycero-3-phospho-(1D-myo-inositol-3-phosphate)-binding site is contributed by R424. The stretch at 563 to 588 (AQFVDEKKQLLDEIMALDDAAQKLTA) forms a coiled coil.

The protein belongs to the protein-tyrosine phosphatase family. Non-receptor class myotubularin subfamily. In terms of tissue distribution, expressed in embryo, larva and in adults. Expressed in a few head and tail neurons. Expressed in hypodermis, body wall and pharyngeal muscles, sheath cells, vulva, distal tip cells and coelomocytes.

Its subcellular location is the cell membrane. It is found in the cell projection. The protein localises to the phagocytic cup. It localises to the apical cell membrane. The protein resides in the cytoplasmic granule membrane. It carries out the reaction a 1,2-diacyl-sn-glycero-3-phospho-(1D-myo-inositol-3,5-bisphosphate) + H2O = a 1,2-diacyl-sn-glycero-3-phospho-(1D-myo-inositol-5-phosphate) + phosphate. The catalysed reaction is a 1,2-diacyl-sn-glycero-3-phospho-(1D-myo-inositol-3-phosphate) + H2O = a 1,2-diacyl-sn-glycero-3-phospho-(1D-myo-inositol) + phosphate. It catalyses the reaction 1,2-dioctanoyl-sn-glycero-3-phospho-(1-D-myo-inositol-3-phosphate) + H2O = 1,2-dioctanoyl-sn-glycero-3-phospho-(1D-myo-inositol) + phosphate. Its function is as follows. Lipid phosphatase that specifically dephosphorylates phosphatidylinositol 3-phosphate (PI3P) and phosphatidylinositol 3,5-bisphosphate (PI(3,5)P2). Negatively regulates accumulation of PI3P on intracellular vesicles. Negatively regulates phagocytosis of apoptotic cells probably by limiting the recruitment and/or the activation of ced-5, ced-2 and ced-12 complex. In addition, may positively regulate phagosome maturation by promoting recycling of apoptotic receptor ced-1 back to the plasma membrane. Essential for embryonic and larval development. May promote migration of distal tip cells. This chain is Phosphatidylinositol-3,5-bisphosphate 3-phosphatase mtm-1, found in Caenorhabditis elegans.